A 349-amino-acid chain; its full sequence is Anthranilate phosphoribosyltransferase (349 aa).

5-phospho-alpha-D-ribose 1-diphosphate-binding positions include G82, 85 to 86 (GD), 92 to 95 (NVST), 110 to 118 (KHGNRAVSG), and S122. G82 serves as a coordination point for anthranilate. S94 is a Mg(2+) binding site. Residue N113 participates in anthranilate binding. Anthranilate is bound at residue R168. Mg(2+) is bound by residues D227 and E228.

It belongs to the anthranilate phosphoribosyltransferase family. In terms of assembly, homodimer. Requires Mg(2+) as cofactor.

It carries out the reaction N-(5-phospho-beta-D-ribosyl)anthranilate + diphosphate = 5-phospho-alpha-D-ribose 1-diphosphate + anthranilate. The protein operates within amino-acid biosynthesis; L-tryptophan biosynthesis; L-tryptophan from chorismate: step 2/5. In terms of biological role, catalyzes the transfer of the phosphoribosyl group of 5-phosphorylribose-1-pyrophosphate (PRPP) to anthranilate to yield N-(5'-phosphoribosyl)-anthranilate (PRA). The sequence is that of Anthranilate phosphoribosyltransferase from Pseudomonas putida (strain ATCC 700007 / DSM 6899 / JCM 31910 / BCRC 17059 / LMG 24140 / F1).